Consider the following 305-residue polypeptide: UDP-3-O-acyl-N-acetylglucosamine deacetylase (305 aa).

Zn(2+) is bound by residues His-78, His-237, and Asp-241. The active-site Proton donor is His-264.

This sequence belongs to the LpxC family. Zn(2+) serves as cofactor.

It catalyses the reaction a UDP-3-O-[(3R)-3-hydroxyacyl]-N-acetyl-alpha-D-glucosamine + H2O = a UDP-3-O-[(3R)-3-hydroxyacyl]-alpha-D-glucosamine + acetate. It functions in the pathway glycolipid biosynthesis; lipid IV(A) biosynthesis; lipid IV(A) from (3R)-3-hydroxytetradecanoyl-[acyl-carrier-protein] and UDP-N-acetyl-alpha-D-glucosamine: step 2/6. Functionally, catalyzes the hydrolysis of UDP-3-O-myristoyl-N-acetylglucosamine to form UDP-3-O-myristoylglucosamine and acetate, the committed step in lipid A biosynthesis. The polypeptide is UDP-3-O-acyl-N-acetylglucosamine deacetylase (Burkholderia pseudomallei (strain 668)).